The chain runs to 157 residues: Protein Smg homolog (157 aa).

Belongs to the Smg family.

The polypeptide is Protein Smg homolog (Aeromonas hydrophila subsp. hydrophila (strain ATCC 7966 / DSM 30187 / BCRC 13018 / CCUG 14551 / JCM 1027 / KCTC 2358 / NCIMB 9240 / NCTC 8049)).